Reading from the N-terminus, the 402-residue chain is mRNA-capping enzyme subunit alpha (402 aa).

The N6-GMP-lysine intermediate role is filled by Lys-66.

This sequence belongs to the eukaryotic GTase family. In terms of assembly, heterodimer. The mRNA-capping enzyme is composed of two separate chains alpha and beta, respectively a mRNA guanylyltransferase and an mRNA 5'-triphosphate monophosphatase.

Its subcellular location is the nucleus. The enzyme catalyses a 5'-end diphospho-ribonucleoside in mRNA + GTP + H(+) = a 5'-end (5'-triphosphoguanosine)-ribonucleoside in mRNA + diphosphate. Functionally, second step of mRNA capping. Transfer of the GMP moiety of GTP to the 5'-end of RNA via an enzyme-GMP covalent reaction intermediate. The chain is mRNA-capping enzyme subunit alpha (rnp-2) from Neurospora crassa (strain ATCC 24698 / 74-OR23-1A / CBS 708.71 / DSM 1257 / FGSC 987).